The primary structure comprises 339 residues: Deubiquitinase and deneddylase Dub2 (339 aa).

The chain crosses the membrane as a helical span at residues 36 to 56 (IIIALFLIVISCGLILCAYTF). Residues H203, D220, and C282 contribute to the active site.

Belongs to the peptidase C48 family.

The protein localises to the secreted. It is found in the host cell. It localises to the membrane. Functionally, effector proteins function to alter host cell physiology and promote bacterial survival in host tissues. This protease possesses deubiquitinating and deneddylating activities. This chain is Deubiquitinase and deneddylase Dub2 (cdu2), found in Chlamydia trachomatis serovar L2 (strain ATCC VR-902B / DSM 19102 / 434/Bu).